Consider the following 957-residue polypeptide: Glycine dehydrogenase (decarboxylating) (957 aa).

K702 bears the N6-(pyridoxal phosphate)lysine mark.

This sequence belongs to the GcvP family. As to quaternary structure, the glycine cleavage system is composed of four proteins: P, T, L and H. Pyridoxal 5'-phosphate is required as a cofactor.

The catalysed reaction is N(6)-[(R)-lipoyl]-L-lysyl-[glycine-cleavage complex H protein] + glycine + H(+) = N(6)-[(R)-S(8)-aminomethyldihydrolipoyl]-L-lysyl-[glycine-cleavage complex H protein] + CO2. Functionally, the glycine cleavage system catalyzes the degradation of glycine. The P protein binds the alpha-amino group of glycine through its pyridoxal phosphate cofactor; CO(2) is released and the remaining methylamine moiety is then transferred to the lipoamide cofactor of the H protein. The protein is Glycine dehydrogenase (decarboxylating) of Bradyrhizobium sp. (strain ORS 278).